The sequence spans 1099 residues: Glutamine--fructose-6-phosphate aminotransferase [isomerizing] (1099 aa).

Cys2 acts as the Nucleophile; for GATase activity in catalysis. One can recognise a Glutamine amidotransferase type-2; first part domain in the interval 2–71; it reads CGIIGYIGND…DIDGNIGIGH (70 aa). The 56-residue stretch at 198-253 folds into the HTH cro/C1-type domain; it reads LRKVREKLGLTRKDVEKLCGVKEIYIVKIETGKLESIEEERLKKLCSLYGINFEEI. A DOD-type homing endonuclease domain is found at 278–413; sequence IIGYIIGDGH…IQFLLLRFGI (136 aa). Residues 571–723 enclose the Glutamine amidotransferase type-2; second part domain; it reads SRWATHGNVC…DGDVVVIKKK (153 aa). SIS domains lie at 786-923 and 948-1089; these read LAKC…LLGR and TIKE…VDKP. Lys1094 (for Fru-6P isomerization activity) is an active-site residue.

In the C-terminal section; belongs to the SIS family. GFAT subfamily. Homodimer. This protein undergoes a protein self splicing that involves a post-translational excision of the intervening region (intein) followed by peptide ligation.

It is found in the cytoplasm. It catalyses the reaction D-fructose 6-phosphate + L-glutamine = D-glucosamine 6-phosphate + L-glutamate. Catalyzes the first step in hexosamine metabolism, converting fructose-6P into glucosamine-6P using glutamine as a nitrogen source. This is Glutamine--fructose-6-phosphate aminotransferase [isomerizing] (glmS) from Methanocaldococcus jannaschii (strain ATCC 43067 / DSM 2661 / JAL-1 / JCM 10045 / NBRC 100440) (Methanococcus jannaschii).